The following is a 114-amino-acid chain: Dolichyl-diphosphooligosaccharide--protein glycosyltransferase subunit DAD1 (114 aa).

Over 1–30 the chain is Cytoplasmic; sequence MPRATSDAKLLIQSLGKAYAATPTNLKIID. Residues 31–51 traverse the membrane as a helical segment; sequence LYVVFAVATALIQVVYMGIVG. Over 52 to 54 the chain is Lumenal; that stretch reads SFP. A helical transmembrane segment spans residues 55–75; the sequence is FNSFLSGVLSCIGTAVLAVCL. Residues 76–93 lie on the Cytoplasmic side of the membrane; it reads RIQVNKDNKEFKDLPPER. Residues 94–114 traverse the membrane as a helical segment; that stretch reads AFADFVLCNLVLHLVIMNFLG.

It belongs to the DAD/OST2 family. Component of the oligosaccharyltransferase (OST) complex.

It localises to the endoplasmic reticulum membrane. Its pathway is protein modification; protein glycosylation. Its function is as follows. Subunit of the oligosaccharyl transferase (OST) complex that catalyzes the initial transfer of a defined glycan (Glc(3)Man(9)GlcNAc(2) in eukaryotes) from the lipid carrier dolichol-pyrophosphate to an asparagine residue within an Asn-X-Ser/Thr consensus motif in nascent polypeptide chains, the first step in protein N-glycosylation. N-glycosylation occurs cotranslationally and the complex associates with the Sec61 complex at the channel-forming translocon complex that mediates protein translocation across the endoplasmic reticulum (ER). All subunits are required for a maximal enzyme activity. The polypeptide is Dolichyl-diphosphooligosaccharide--protein glycosyltransferase subunit DAD1 (DAD1) (Oryza sativa subsp. indica (Rice)).